The sequence spans 103 residues: Pilin (103 aa).

The N-terminal stretch at 1-30 is a signal peptide; that stretch reads MYRFACRTLMLAACILATGVAGLGVGAQSA. Over residues 61 to 76 the composition is skewed to basic and acidic residues; it reads HDDFHRDSDGPDHSRD. The disordered stretch occupies residues 61–103; sequence HDDFHRDSDGPDHSRDYPGPILEGPVLDDPGAAPPPPAAGGGA. Residues 92-103 show a composition bias toward pro residues; that stretch reads AAPPPPAAGGGA.

The protein belongs to the mycobacterial pilin family. As to quaternary structure, forms a homomer composed of subunits assembled in a large structure.

It is found in the fimbrium. Functionally, structural subunit of pili, which are thin, flexible, coiled-coil, aggregative fibers. Mediates adhesion to the extracellular matrix, an event that would facilitate direct interaction with the host epithelium during infection in the lung or other tissues. This Mycobacterium bovis (strain ATCC BAA-935 / AF2122/97) protein is Pilin (mtp).